The following is a 238-amino-acid chain: Ribosomal RNA small subunit methyltransferase G (238 aa).

Residues Gly106, Leu111, 157–158 (IE), and Arg170 each bind S-adenosyl-L-methionine.

The protein belongs to the methyltransferase superfamily. RNA methyltransferase RsmG family.

The protein resides in the cytoplasm. It carries out the reaction guanosine(527) in 16S rRNA + S-adenosyl-L-methionine = N(7)-methylguanosine(527) in 16S rRNA + S-adenosyl-L-homocysteine. Specifically methylates the N7 position of guanine in position 527 of 16S rRNA. This is Ribosomal RNA small subunit methyltransferase G from Psychrobacter arcticus (strain DSM 17307 / VKM B-2377 / 273-4).